The following is a 322-amino-acid chain: 4-diphosphocytidyl-2-C-methyl-D-erythritol kinase (322 aa).

K25 is an active-site residue. 110–120 (PVAGGMAGGSA) serves as a coordination point for ATP. Residue D152 is part of the active site.

It belongs to the GHMP kinase family. IspE subfamily.

The enzyme catalyses 4-CDP-2-C-methyl-D-erythritol + ATP = 4-CDP-2-C-methyl-D-erythritol 2-phosphate + ADP + H(+). It participates in isoprenoid biosynthesis; isopentenyl diphosphate biosynthesis via DXP pathway; isopentenyl diphosphate from 1-deoxy-D-xylulose 5-phosphate: step 3/6. Functionally, catalyzes the phosphorylation of the position 2 hydroxy group of 4-diphosphocytidyl-2C-methyl-D-erythritol. This is 4-diphosphocytidyl-2-C-methyl-D-erythritol kinase from Mycolicibacterium vanbaalenii (strain DSM 7251 / JCM 13017 / BCRC 16820 / KCTC 9966 / NRRL B-24157 / PYR-1) (Mycobacterium vanbaalenii).